The sequence spans 386 residues: Succinate--CoA ligase [ADP-forming] subunit beta (386 aa).

Residues lysine 9–leucine 244 enclose the ATP-grasp domain. ATP contacts are provided by residues lysine 46, glycine 53–glycine 55, valine 102, and glutamate 107. The Mg(2+) site is built by asparagine 199 and aspartate 213. Substrate contacts are provided by residues asparagine 264 and glycine 321–methionine 323.

Belongs to the succinate/malate CoA ligase beta subunit family. As to quaternary structure, heterotetramer of two alpha and two beta subunits. Requires Mg(2+) as cofactor.

The catalysed reaction is succinate + ATP + CoA = succinyl-CoA + ADP + phosphate. The enzyme catalyses GTP + succinate + CoA = succinyl-CoA + GDP + phosphate. It functions in the pathway carbohydrate metabolism; tricarboxylic acid cycle; succinate from succinyl-CoA (ligase route): step 1/1. Functionally, succinyl-CoA synthetase functions in the citric acid cycle (TCA), coupling the hydrolysis of succinyl-CoA to the synthesis of either ATP or GTP and thus represents the only step of substrate-level phosphorylation in the TCA. The beta subunit provides nucleotide specificity of the enzyme and binds the substrate succinate, while the binding sites for coenzyme A and phosphate are found in the alpha subunit. This Chlamydia trachomatis serovar L2 (strain ATCC VR-902B / DSM 19102 / 434/Bu) protein is Succinate--CoA ligase [ADP-forming] subunit beta.